The chain runs to 516 residues: 2,3-bisphosphoglycerate-independent phosphoglycerate mutase (516 aa).

Asp-13 and Ser-63 together coordinate Mn(2+). The Phosphoserine intermediate role is filled by Ser-63. Substrate-binding positions include His-124, 154–155 (RD), Arg-186, Arg-192, 262–265 (RPDR), and Lys-337. Mn(2+) contacts are provided by Asp-404, His-408, Asp-445, His-446, and His-464.

It belongs to the BPG-independent phosphoglycerate mutase family. In terms of assembly, monomer. Mn(2+) is required as a cofactor.

The enzyme catalyses (2R)-2-phosphoglycerate = (2R)-3-phosphoglycerate. It functions in the pathway carbohydrate degradation; glycolysis; pyruvate from D-glyceraldehyde 3-phosphate: step 3/5. Its function is as follows. Catalyzes the interconversion of 2-phosphoglycerate and 3-phosphoglycerate. The sequence is that of 2,3-bisphosphoglycerate-independent phosphoglycerate mutase from Cellvibrio japonicus (strain Ueda107) (Pseudomonas fluorescens subsp. cellulosa).